A 488-amino-acid polypeptide reads, in one-letter code: UDP-N-acetylmuramoyl-L-alanyl-D-glutamate--2,6-diaminopimelate ligase (488 aa).

Residue Ser-29 participates in UDP-N-acetyl-alpha-D-muramoyl-L-alanyl-D-glutamate binding. Gly-108–Ser-114 is a binding site for ATP. UDP-N-acetyl-alpha-D-muramoyl-L-alanyl-D-glutamate is bound by residues Thr-150–Thr-151, Ser-177, Gln-183, and Arg-185. At Lys-217 the chain carries N6-carboxylysine. Meso-2,6-diaminopimelate is bound by residues Arg-381, Asp-405–Arg-408, Gly-453, and Glu-457. The Meso-diaminopimelate recognition motif signature appears at Asp-405–Arg-408.

The protein belongs to the MurCDEF family. MurE subfamily. It depends on Mg(2+) as a cofactor. Carboxylation is probably crucial for Mg(2+) binding and, consequently, for the gamma-phosphate positioning of ATP.

The protein resides in the cytoplasm. It carries out the reaction UDP-N-acetyl-alpha-D-muramoyl-L-alanyl-D-glutamate + meso-2,6-diaminopimelate + ATP = UDP-N-acetyl-alpha-D-muramoyl-L-alanyl-gamma-D-glutamyl-meso-2,6-diaminopimelate + ADP + phosphate + H(+). It functions in the pathway cell wall biogenesis; peptidoglycan biosynthesis. Catalyzes the addition of meso-diaminopimelic acid to the nucleotide precursor UDP-N-acetylmuramoyl-L-alanyl-D-glutamate (UMAG) in the biosynthesis of bacterial cell-wall peptidoglycan. This Brucella melitensis biotype 1 (strain ATCC 23456 / CCUG 17765 / NCTC 10094 / 16M) protein is UDP-N-acetylmuramoyl-L-alanyl-D-glutamate--2,6-diaminopimelate ligase.